A 517-amino-acid polypeptide reads, in one-letter code: Dermokine (517 aa).

Positions 1-21 (MKLQGSLACLLLALCLGGGAA) are cleaved as a signal peptide. Disordered regions lie at residues 51 to 83 (VGQGAKEAASSGIQNALGQGHGEEGGSTLMGSR) and 123 to 364 (AGSW…IQKE). Gly residues-rich tracts occupy residues 127-145 (GTSGGHGAYGSQGGAGVQG) and 167-176 (GSVGQGGNGG). Over residues 197-206 (RGNNQNSGCT) the composition is skewed to polar residues. The span at 212 to 235 (GSHESFSNSGGSSNDGSRGSQGSH) shows a compositional bias: low complexity. The span at 236 to 250 (GSNGQGSSGRGGGQG) shows a compositional bias: gly residues. Residues 251-289 (NSDNNGSSSSSSGSNSGNSNSGNSGNSNSGNSGNSGSGS) are compositionally biased toward low complexity. Gly residues-rich tracts occupy residues 308–332 (GSRGGSGGSGGSGGSGGSGGSGGGN) and 347–358 (GGSGSQGHGSNG).

The protein belongs to the dermokine family. In terms of assembly, homooligomer. Seems to be able to homodimerize and homotrimerize. Post-translationally, O-glycosylated. As to expression, highly expressed in stratified epithelia; such as the skin, tongue, esophagus, forestomach and vagina. Also found in lung, trachea and urinary bladder.

Its subcellular location is the secreted. May act as a soluble regulator of keratinocyte differentiation. This Mus musculus (Mouse) protein is Dermokine (Dmkn).